Consider the following 1400-residue polypeptide: DNA-directed RNA polymerase subunit beta' (1400 aa).

Positions 71, 73, 86, and 89 each coordinate Zn(2+). Residues Asp-462, Asp-464, and Asp-466 each contribute to the Mg(2+) site. Zn(2+) contacts are provided by Cys-810, Cys-884, Cys-891, and Cys-894.

It belongs to the RNA polymerase beta' chain family. In terms of assembly, the RNAP catalytic core consists of 2 alpha, 1 beta, 1 beta' and 1 omega subunit. When a sigma factor is associated with the core the holoenzyme is formed, which can initiate transcription. The cofactor is Mg(2+). It depends on Zn(2+) as a cofactor.

The enzyme catalyses RNA(n) + a ribonucleoside 5'-triphosphate = RNA(n+1) + diphosphate. DNA-dependent RNA polymerase catalyzes the transcription of DNA into RNA using the four ribonucleoside triphosphates as substrates. The polypeptide is DNA-directed RNA polymerase subunit beta' (Rhodopseudomonas palustris (strain TIE-1)).